A 250-amino-acid polypeptide reads, in one-letter code: tRNA:m(4)X modification enzyme TRM13 (250 aa).

Positions 1-10 are enriched in basic residues; sequence MGRAPAKRKP. Residues 1-20 are disordered; that stretch reads MGRAPAKRKPSSPPPPPPPG. Residues 11–20 show a composition bias toward pro residues; sequence SSPPPPPPPG. The segment at 62 to 89 adopts a CHHC U11-48K-type zinc-finger fold; it reads LVPCPVDPSHTVLEENLEAHVGKCPLKK. The Zn(2+) site is built by C65, H71, H81, and C85.

This sequence belongs to the methyltransferase TRM13 family.

The protein resides in the nucleus. Its subcellular location is the cytoplasm. The enzyme catalyses cytidine(4) in tRNA(Pro) + S-adenosyl-L-methionine = 2'-O-methylcytidine(4) in tRNA(Pro) + S-adenosyl-L-homocysteine + H(+). The catalysed reaction is cytidine(4) in tRNA(Gly)(GCC) + S-adenosyl-L-methionine = 2'-O-methylcytidine(4) in tRNA(Gly)(GCC) + S-adenosyl-L-homocysteine + H(+). It carries out the reaction adenosine(4) in tRNA(His) + S-adenosyl-L-methionine = 2'-O-methyladenosine(4) in tRNA(His) + S-adenosyl-L-homocysteine + H(+). In terms of biological role, tRNA methylase that catalyzes 2'-O-methyladenosine (Am) nucleoside formation on tRNA(Gly)(GCC) in vitro. May 2'-O-methylate cytidine(4) in tRNA(Pro) and tRNA(Gly)(GCC), and adenosine(4) in tRNA(His). Involved in salt stress tolerance. This Oryza sativa subsp. japonica (Rice) protein is tRNA:m(4)X modification enzyme TRM13.